A 387-amino-acid chain; its full sequence is Phosphoglycerate kinase (387 aa).

Substrate-binding positions include Asp21–Asn23, Arg36, and His59–Arg62. Lys84 is modified (N6-acetyllysine). Positions 113 and 146 each coordinate substrate. ATP-binding positions include Lys197, Glu314, and Gly340–Thr343.

The protein belongs to the phosphoglycerate kinase family. Monomer.

The protein localises to the cytoplasm. It catalyses the reaction (2R)-3-phosphoglycerate + ATP = (2R)-3-phospho-glyceroyl phosphate + ADP. The protein operates within carbohydrate degradation; glycolysis; pyruvate from D-glyceraldehyde 3-phosphate: step 2/5. This Escherichia coli O157:H7 protein is Phosphoglycerate kinase (pgk).